Consider the following 315-residue polypeptide: Bifunctional protein FolD (315 aa).

Residues 166–168 (GRS), S193, and I234 contribute to the NADP(+) site.

Belongs to the tetrahydrofolate dehydrogenase/cyclohydrolase family. As to quaternary structure, homodimer.

The enzyme catalyses (6R)-5,10-methylene-5,6,7,8-tetrahydrofolate + NADP(+) = (6R)-5,10-methenyltetrahydrofolate + NADPH. It carries out the reaction (6R)-5,10-methenyltetrahydrofolate + H2O = (6R)-10-formyltetrahydrofolate + H(+). It functions in the pathway one-carbon metabolism; tetrahydrofolate interconversion. In terms of biological role, catalyzes the oxidation of 5,10-methylenetetrahydrofolate to 5,10-methenyltetrahydrofolate and then the hydrolysis of 5,10-methenyltetrahydrofolate to 10-formyltetrahydrofolate. The polypeptide is Bifunctional protein FolD (Treponema pallidum (strain Nichols)).